We begin with the raw amino-acid sequence, 211 residues long: Shikimate kinase (211 aa).

Residues 1-13 (MNASANLCAASAN) are compositionally biased toward low complexity. The segment at 1–24 (MNASANLCAASANDPQPGDQEAAH) is disordered. 50–55 (GAGKTT) is a binding site for ATP. Residue Thr-54 participates in Mg(2+) binding. 3 residues coordinate substrate: Asp-72, Arg-96, and Gly-118. Arg-156 contacts ATP. Arg-175 lines the substrate pocket.

The protein belongs to the shikimate kinase family. In terms of assembly, monomer. It depends on Mg(2+) as a cofactor.

The protein localises to the cytoplasm. The catalysed reaction is shikimate + ATP = 3-phosphoshikimate + ADP + H(+). The protein operates within metabolic intermediate biosynthesis; chorismate biosynthesis; chorismate from D-erythrose 4-phosphate and phosphoenolpyruvate: step 5/7. Catalyzes the specific phosphorylation of the 3-hydroxyl group of shikimic acid using ATP as a cosubstrate. This Bordetella parapertussis (strain 12822 / ATCC BAA-587 / NCTC 13253) protein is Shikimate kinase.